Reading from the N-terminus, the 415-residue chain is Serine hydroxymethyltransferase (415 aa).

Residues leucine 120 and 124 to 126 (GHL) contribute to the (6S)-5,6,7,8-tetrahydrofolate site. Lysine 229 carries the N6-(pyridoxal phosphate)lysine modification.

Belongs to the SHMT family. As to quaternary structure, homodimer. Pyridoxal 5'-phosphate serves as cofactor.

It is found in the cytoplasm. It carries out the reaction (6R)-5,10-methylene-5,6,7,8-tetrahydrofolate + glycine + H2O = (6S)-5,6,7,8-tetrahydrofolate + L-serine. Its pathway is one-carbon metabolism; tetrahydrofolate interconversion. It functions in the pathway amino-acid biosynthesis; glycine biosynthesis; glycine from L-serine: step 1/1. Catalyzes the reversible interconversion of serine and glycine with tetrahydrofolate (THF) serving as the one-carbon carrier. This reaction serves as the major source of one-carbon groups required for the biosynthesis of purines, thymidylate, methionine, and other important biomolecules. Also exhibits THF-independent aldolase activity toward beta-hydroxyamino acids, producing glycine and aldehydes, via a retro-aldol mechanism. This chain is Serine hydroxymethyltransferase, found in Caldicellulosiruptor bescii (strain ATCC BAA-1888 / DSM 6725 / KCTC 15123 / Z-1320) (Anaerocellum thermophilum).